The chain runs to 176 residues: NAD(P)H-quinone oxidoreductase subunit 6, chloroplastic (176 aa).

5 consecutive transmembrane segments (helical) span residues 10-30 (ILML…VLLT), 33-53 (IYSA…YFLL), 60-80 (VAQL…AVMF), 95-115 (IGDG…MTTI), and 152-172 (FYLP…GAIT).

The protein belongs to the complex I subunit 6 family. NDH is composed of at least 16 different subunits, 5 of which are encoded in the nucleus.

The protein resides in the plastid. Its subcellular location is the chloroplast thylakoid membrane. It carries out the reaction a plastoquinone + NADH + (n+1) H(+)(in) = a plastoquinol + NAD(+) + n H(+)(out). The enzyme catalyses a plastoquinone + NADPH + (n+1) H(+)(in) = a plastoquinol + NADP(+) + n H(+)(out). Functionally, NDH shuttles electrons from NAD(P)H:plastoquinone, via FMN and iron-sulfur (Fe-S) centers, to quinones in the photosynthetic chain and possibly in a chloroplast respiratory chain. The immediate electron acceptor for the enzyme in this species is believed to be plastoquinone. Couples the redox reaction to proton translocation, and thus conserves the redox energy in a proton gradient. In Lolium perenne (Perennial ryegrass), this protein is NAD(P)H-quinone oxidoreductase subunit 6, chloroplastic (ndhG).